Here is a 337-residue protein sequence, read N- to C-terminus: Ribosomal RNA small subunit methyltransferase H (337 aa).

S-adenosyl-L-methionine-binding positions include 33 to 35 (AGH), Asp-53, Asp-101, and Gln-108.

The protein belongs to the methyltransferase superfamily. RsmH family.

The protein localises to the cytoplasm. It catalyses the reaction cytidine(1402) in 16S rRNA + S-adenosyl-L-methionine = N(4)-methylcytidine(1402) in 16S rRNA + S-adenosyl-L-homocysteine + H(+). Its function is as follows. Specifically methylates the N4 position of cytidine in position 1402 (C1402) of 16S rRNA. In Herpetosiphon aurantiacus (strain ATCC 23779 / DSM 785 / 114-95), this protein is Ribosomal RNA small subunit methyltransferase H.